We begin with the raw amino-acid sequence, 358 residues long: Protein RecA (358 aa).

An ATP-binding site is contributed by 67-74; that stretch reads GPESSGKT.

The protein belongs to the RecA family.

The protein localises to the cytoplasm. Functionally, can catalyze the hydrolysis of ATP in the presence of single-stranded DNA, the ATP-dependent uptake of single-stranded DNA by duplex DNA, and the ATP-dependent hybridization of homologous single-stranded DNAs. It interacts with LexA causing its activation and leading to its autocatalytic cleavage. The polypeptide is Protein RecA (Xenorhabdus nematophila (strain ATCC 19061 / DSM 3370 / CCUG 14189 / LMG 1036 / NCIMB 9965 / AN6)).